The following is a 141-amino-acid chain: Small ribosomal subunit protein eS12 (141 aa).

It belongs to the eukaryotic ribosomal protein eS12 family. As to quaternary structure, component of the small ribosomal subunit. Mature ribosomes consist of a small (40S) and a large (60S) subunit. The 40S subunit contains about 32 different proteins and 1 molecule of RNA (18S). The 60S subunit contains about 42 different proteins and 3 molecules of RNA (28S, 5.8S and 5S).

It localises to the cytoplasm. In terms of biological role, component of the ribosome, a large ribonucleoprotein complex responsible for the synthesis of proteins in the cell. The small ribosomal subunit (SSU) binds messenger RNAs (mRNAs) and translates the encoded message by selecting cognate aminoacyl-transfer RNA (tRNA) molecules. The large subunit (LSU) contains the ribosomal catalytic site termed the peptidyl transferase center (PTC), which catalyzes the formation of peptide bonds, thereby polymerizing the amino acids delivered by tRNAs into a polypeptide chain. The nascent polypeptides leave the ribosome through a tunnel in the LSU and interact with protein factors that function in enzymatic processing, targeting, and the membrane insertion of nascent chains at the exit of the ribosomal tunnel. In Plasmodium falciparum (isolate 3D7), this protein is Small ribosomal subunit protein eS12.